The following is a 357-amino-acid chain: Cytoplasmic tRNA 2-thiolation protein 1 (357 aa).

Positions 314 to 348 (GVSRTRGRRGEKAGLHPDVGRGGGGGSSGPAEVAS) are disordered. Basic and acidic residues predominate over residues 321 to 332 (RRGEKAGLHPDV).

Belongs to the TtcA family. CTU1/NCS6/ATPBD3 subfamily.

Its subcellular location is the cytoplasm. It participates in tRNA modification; 5-methoxycarbonylmethyl-2-thiouridine-tRNA biosynthesis. Plays a central role in 2-thiolation of mcm(5)S(2)U at tRNA wobble positions of tRNA(Lys), tRNA(Glu) and tRNA(Gln). Directly binds tRNAs and probably acts by catalyzing adenylation of tRNAs, an intermediate required for 2-thiolation. It is unclear whether it acts as a sulfurtransferase that transfers sulfur from thiocarboxylated URM1 onto the uridine of tRNAs at wobble position. The protein is Cytoplasmic tRNA 2-thiolation protein 1 of Chlamydomonas reinhardtii (Chlamydomonas smithii).